The following is a 273-amino-acid chain: Shikimate dehydrogenase (NADP(+)) (273 aa).

Residues 14–16 (SKS) and Thr61 contribute to the shikimate site. Lys65 functions as the Proton acceptor in the catalytic mechanism. The shikimate site is built by Asn86 and Asp102. NADP(+) contacts are provided by residues 126-130 (GAGGA), 150-155 (NRTHAK), and Met213. Residue Tyr215 participates in shikimate binding. An NADP(+)-binding site is contributed by Gly237.

The protein belongs to the shikimate dehydrogenase family. As to quaternary structure, homodimer.

It catalyses the reaction shikimate + NADP(+) = 3-dehydroshikimate + NADPH + H(+). The protein operates within metabolic intermediate biosynthesis; chorismate biosynthesis; chorismate from D-erythrose 4-phosphate and phosphoenolpyruvate: step 4/7. Involved in the biosynthesis of the chorismate, which leads to the biosynthesis of aromatic amino acids. Catalyzes the reversible NADPH linked reduction of 3-dehydroshikimate (DHSA) to yield shikimate (SA). This chain is Shikimate dehydrogenase (NADP(+)), found in Aeromonas salmonicida (strain A449).